A 152-amino-acid polypeptide reads, in one-letter code: uncharacterized protein (152 aa).

The Cytoplasmic portion of the chain corresponds to 1 to 5 (MWFPQ). Residues 6–26 (IIAGMAAGGAASAMTPGKVLF) traverse the membrane as a helical segment. The Extracellular portion of the chain corresponds to 27–38 (TNALGLGCSRSR). A helical transmembrane segment spans residues 39–59 (GLFLEMFGTAVLCLTVLMTAV). Over 60 to 65 (EKRETN) the chain is Cytoplasmic. A helical transmembrane segment spans residues 66 to 86 (FMAALPIGISLFMAHMALTGY). At 87-110 (TGTGVNPARSLGAAVAARYFPHYH) the chain is on the extracellular side. The NPA signature appears at 92 to 94 (NPA). Residues 111–131 (WIYWISPLLGAFLAWSVWQLL) form a helical membrane-spanning segment. Residues 132–152 (QILDYTTYVNAEKAAGQKKED) are Cytoplasmic-facing.

The protein belongs to the MIP/aquaporin (TC 1.A.8) family.

The protein resides in the membrane. This is an uncharacterized protein from Saccharomyces cerevisiae (strain RM11-1a) (Baker's yeast).